A 570-amino-acid polypeptide reads, in one-letter code: Hydroxylamine reductase (570 aa).

Residues cysteine 5, cysteine 8, cysteine 17, and cysteine 23 each contribute to the [4Fe-4S] cluster site. Hybrid [4Fe-2O-2S] cluster-binding residues include histidine 266, glutamate 290, cysteine 334, cysteine 425, cysteine 453, cysteine 478, glutamate 513, and lysine 515. Residue cysteine 425 is modified to Cysteine persulfide.

Belongs to the HCP family. The cofactor is [4Fe-4S] cluster. Hybrid [4Fe-2O-2S] cluster is required as a cofactor.

It is found in the cytoplasm. It carries out the reaction A + NH4(+) + H2O = hydroxylamine + AH2 + H(+). Catalyzes the reduction of hydroxylamine to form NH(3) and H(2)O. This is Hydroxylamine reductase from Clostridium botulinum (strain 657 / Type Ba4).